A 131-amino-acid polypeptide reads, in one-letter code: MFITDPISDMIVRIKNANQRKFKTVLIPYSNKKAKILEILLNEGYISSFVTKGEGKDKTLEVALKYKGNQSAIIDFKRISKPGLRVYAAANNLSSVLSGYGTVIISTSKGVMTEKQARKENVGGEVLAYIW.

The protein belongs to the universal ribosomal protein uS8 family. Part of the 30S ribosomal subunit. Contacts proteins S5 and S12.

Its function is as follows. One of the primary rRNA binding proteins, it binds directly to 16S rRNA central domain where it helps coordinate assembly of the platform of the 30S subunit. The chain is Small ribosomal subunit protein uS8 from Mycoplasmopsis agalactiae (strain NCTC 10123 / CIP 59.7 / PG2) (Mycoplasma agalactiae).